Consider the following 32-residue polypeptide: Potassium channel toxin alpha-KTx 10.2 (32 aa).

3 cysteine pairs are disulfide-bonded: cysteine 3-cysteine 22, cysteine 8-cysteine 12, and cysteine 27-cysteine 29. Tyrosine 32 is modified (tyrosine amide).

It belongs to the short scorpion toxin superfamily. Potassium channel inhibitor family. Alpha-KTx 10 subfamily. Expressed by the venom gland.

It is found in the secreted. Functionally, blocks Shaker B potassium-channels (Kv1.1/KCNA1 sub-family). The chain is Potassium channel toxin alpha-KTx 10.2 from Centruroides noxius (Mexican scorpion).